The following is a 618-amino-acid chain: Proline--tRNA ligase (618 aa).

It belongs to the class-II aminoacyl-tRNA synthetase family. ProS type 1 subfamily. Homodimer.

Its subcellular location is the cytoplasm. The catalysed reaction is tRNA(Pro) + L-proline + ATP = L-prolyl-tRNA(Pro) + AMP + diphosphate. Its function is as follows. Catalyzes the attachment of proline to tRNA(Pro) in a two-step reaction: proline is first activated by ATP to form Pro-AMP and then transferred to the acceptor end of tRNA(Pro). As ProRS can inadvertently accommodate and process non-cognate amino acids such as alanine and cysteine, to avoid such errors it has two additional distinct editing activities against alanine. One activity is designated as 'pretransfer' editing and involves the tRNA(Pro)-independent hydrolysis of activated Ala-AMP. The other activity is designated 'posttransfer' editing and involves deacylation of mischarged Ala-tRNA(Pro). The misacylated Cys-tRNA(Pro) is not edited by ProRS. The polypeptide is Proline--tRNA ligase (Streptococcus pyogenes serotype M28 (strain MGAS6180)).